The chain runs to 88 residues: Apolipoprotein C-I (88 aa).

Residues 1–26 form the signal peptide; that stretch reads MRLFLSLPVLVVVLAMVLEGPAPAQA.

It belongs to the apolipoprotein C1 family.

It is found in the secreted. In terms of biological role, inhibitor of lipoprotein binding to the low density lipoprotein (LDL) receptor, LDL receptor-related protein, and very low density lipoprotein (VLDL) receptor. Associates with high density lipoproteins (HDL) and the triacylglycerol-rich lipoproteins in the plasma and makes up about 10% of the protein of the VLDL and 2% of that of HDL. Appears to interfere directly with fatty acid uptake and is also the major plasma inhibitor of cholesteryl ester transfer protein (CETP). Binds free fatty acids and reduces their intracellular esterification. Modulates the interaction of APOE with beta-migrating VLDL and inhibits binding of beta-VLDL to the LDL receptor-related protein. This Arctocephalus gazella (Antarctic fur seal) protein is Apolipoprotein C-I (APOC1).